The sequence spans 309 residues: Protease HtpX homolog (309 aa).

Helical transmembrane passes span 7–27 (TTVLLAAMTALMMIIGQMLGG) and 29–49 (QGMMIALIFAGVMNFASYWYS). Histidine 131 is a binding site for Zn(2+). Glutamate 132 is an active-site residue. Position 135 (histidine 135) interacts with Zn(2+). 2 helical membrane-spanning segments follow: residues 141–161 (ILIGTIAATMAGAIMMLASMA) and 182–202 (IGLIALSIIAPMAAMVIQMAI). Residue glutamate 207 participates in Zn(2+) binding. The segment at 278 to 309 (RHGSDSGTGNRDSSIRRRNMNTEAKAAWDRLR) is disordered.

Belongs to the peptidase M48B family. Requires Zn(2+) as cofactor.

The protein resides in the cell inner membrane. This chain is Protease HtpX homolog, found in Desulforapulum autotrophicum (strain ATCC 43914 / DSM 3382 / VKM B-1955 / HRM2) (Desulfobacterium autotrophicum).